A 155-amino-acid chain; its full sequence is Ribosomal RNA large subunit methyltransferase H (155 aa).

Residues glycine 104 and 123–128 (FGNITL) each bind S-adenosyl-L-methionine.

Belongs to the RNA methyltransferase RlmH family. In terms of assembly, homodimer.

The protein resides in the cytoplasm. It catalyses the reaction pseudouridine(1915) in 23S rRNA + S-adenosyl-L-methionine = N(3)-methylpseudouridine(1915) in 23S rRNA + S-adenosyl-L-homocysteine + H(+). In terms of biological role, specifically methylates the pseudouridine at position 1915 (m3Psi1915) in 23S rRNA. The protein is Ribosomal RNA large subunit methyltransferase H of Mesoplasma florum (strain ATCC 33453 / NBRC 100688 / NCTC 11704 / L1) (Acholeplasma florum).